Consider the following 183-residue polypeptide: NADH-quinone oxidoreductase subunit B 2 (183 aa).

Cysteine 47, cysteine 48, cysteine 113, and cysteine 142 together coordinate [4Fe-4S] cluster.

It belongs to the complex I 20 kDa subunit family. NDH-1 is composed of 14 different subunits. Subunits NuoB, C, D, E, F, and G constitute the peripheral sector of the complex. [4Fe-4S] cluster is required as a cofactor.

The protein resides in the cell inner membrane. It carries out the reaction a quinone + NADH + 5 H(+)(in) = a quinol + NAD(+) + 4 H(+)(out). In terms of biological role, NDH-1 shuttles electrons from NADH, via FMN and iron-sulfur (Fe-S) centers, to quinones in the respiratory chain. The immediate electron acceptor for the enzyme in this species is believed to be ubiquinone. Couples the redox reaction to proton translocation (for every two electrons transferred, four hydrogen ions are translocated across the cytoplasmic membrane), and thus conserves the redox energy in a proton gradient. In Anaeromyxobacter sp. (strain Fw109-5), this protein is NADH-quinone oxidoreductase subunit B 2.